The following is a 331-amino-acid chain: L-lactate dehydrogenase A chain (331 aa).

NAD(+) contacts are provided by residues 29-57 (GMVG…MEDK) and arginine 98. Positions 105, 137, and 168 each coordinate substrate. Asparagine 137 contributes to the NAD(+) binding site. The active-site Proton acceptor is the histidine 192. Threonine 247 contacts substrate.

This sequence belongs to the LDH/MDH superfamily. LDH family. As to quaternary structure, homotetramer.

The protein localises to the cytoplasm. The catalysed reaction is (S)-lactate + NAD(+) = pyruvate + NADH + H(+). Its pathway is fermentation; pyruvate fermentation to lactate; (S)-lactate from pyruvate: step 1/1. Interconverts simultaneously and stereospecifically pyruvate and lactate with concomitant interconversion of NADH and NAD(+). This is L-lactate dehydrogenase A chain (ldha) from Notothenia neglecta (Yellowbelly rockcod).